The primary structure comprises 236 residues: Ascorbate-specific transmembrane electron transporter 1 (236 aa).

The Cytoplasmic portion of the chain corresponds to 1–11; the sequence is MGLGLGVRAAP. The helical transmembrane segment at 12–32 threads the bilayer; the sequence is FTYAAHALAVAAAAMVLVWSI. The Cytochrome b561 domain occupies 15 to 219; that stretch reads AAHALAVAAA…FGASVVVAAI (205 aa). At 33–50 the chain is on the extracellular side; the sequence is QFRGGLAIESTNKNLIFN. Residues 51–71 traverse the membrane as a helical segment; the sequence is VHPVLMLIGYVIIGGEAIMVY. A heme b-binding site is contributed by His52. Residue 67-75 participates in L-ascorbate binding; it reads AIMVYRVLP. The Cytoplasmic segment spans residues 72–84; the sequence is RVLPTSNHDTTKL. The chain crosses the membrane as a helical span at residues 85 to 105; the sequence is IHLILHGIALVLGAVGIYFAF. Heme b contacts are provided by His86 and His120. Topologically, residues 106-122 are extracellular; it reads KNHNESGIANLYSLHSW. Position 116-125 (116-125) interacts with monodehydro-L-ascorbate radical; sequence LYSLHSWIGI. The chain crosses the membrane as a helical span at residues 123–143; that stretch reads IGIGTITLYGIQWIIGFVTFF. Over 144-153 the chain is Cytoplasmic; that stretch reads FPGAAPNVKK. The helical transmembrane segment at 154-174 threads the bilayer; that stretch reads GVLPWHVLFGLFVYILALANA. His159 contacts heme b. At 175 to 201 the chain is on the extracellular side; sequence ELGFLEKLTFLESSGLDKYGTEAFLVN. The helical transmembrane segment at 202 to 222 threads the bilayer; the sequence is FTALVVVLFGASVVVAAIAPV. Over 223–236 the chain is Cytoplasmic; it reads RLEEPQGYDPIPEN.

Heme b serves as cofactor.

It localises to the membrane. Its activity is regulated as follows. Inhibited by diethylpyrocarbonate. Functionally, two-heme-containing cytochrome. Catalyzes ascorbate-dependent trans-membrane electron transfer by utilizing a concerted H(+)/e(-) transfer mechanism. This Zea mays (Maize) protein is Ascorbate-specific transmembrane electron transporter 1 (ZCYB).